A 1891-amino-acid polypeptide reads, in one-letter code: TATA-binding protein-associated factor mot1 (1891 aa).

The HEAT 1 repeat unit spans residues 30 to 68 (PDELFNLLGRILPYLRSKSWDTRAAAAKAIGLIVANADT). Disordered regions lie at residues 184-216 (FVAS…LSKR), 241-283 (LSSR…LDRS), and 295-316 (FKGA…EGPN). The segment covering 264 to 275 (ENGEERNGDSKP) has biased composition (basic and acidic residues). HEAT repeat units lie at residues 473–511 (SKLM…EFVK) and 569–606 (SSFG…LEGE). Residues 699-710 (SAAAPARSSPAS) show a composition bias toward low complexity. The disordered stretch occupies residues 699 to 740 (SAAAPARSSPASNTPEGTKGRRRKSEKKEAPPPSAHNVDGHM). HEAT repeat units lie at residues 957–996 (PKKP…YYTT), 1139–1177 (YPWV…VITV), 1181–1216 (TMLV…VMED), and 1219–1257 (LPYV…LVPL). The Helicase ATP-binding domain occupies 1316-1489 (AFLNRYNLHG…WSLFDFLMPG (174 aa)). 1329–1336 (DDMGLGKT) provides a ligand contact to ATP. The DEAH box signature appears at 1440 to 1443 (DEGH). Residues 1526–1565 (EALHKQVLPFLLRRLKEEVLNDLPPKIIQNYYCDPSELQR) form an HEAT 8 repeat. One can recognise a Helicase C-terminal domain in the interval 1663 to 1813 (DLSGASYVSP…STVVNQQNAG (151 aa)).

The protein belongs to the SNF2/RAD54 helicase family. In terms of assembly, forms the NCT transcriptional regulatory complex with nctA and nctB.

Its subcellular location is the nucleus. Regulates transcription in association with TATA binding protein (TBP). Removes TBP from the TATA box via its C-terminal ATPase activity. Both transcription activation and repression require its ATPase activity. Part of the NCT transcriptional regulatory complex that acts as a key regulator of ergosterol biosynthesis and the azole exporter cdr1B. The NCT complex binds the promoters of genes linked to azole susceptibility, and especially represses the expression of cdr1B transporter. In Aspergillus fumigatus (strain ATCC MYA-4609 / CBS 101355 / FGSC A1100 / Af293) (Neosartorya fumigata), this protein is TATA-binding protein-associated factor mot1.